Here is a 309-residue protein sequence, read N- to C-terminus: Foldase protein PrsA 2 (309 aa).

The signal sequence occupies residues 1–22 (MKQMNKLITGVVTLATVVTLSA). Residue Cys-23 is the site of N-palmitoyl cysteine attachment. The S-diacylglycerol cysteine moiety is linked to residue Cys-23. Positions 146–241 (TPTMTAEIMQ…RTYHIIKVTK (96 aa)) constitute a PpiC domain.

The protein belongs to the PrsA family.

Its subcellular location is the cell membrane. The enzyme catalyses [protein]-peptidylproline (omega=180) = [protein]-peptidylproline (omega=0). Its function is as follows. Plays a major role in protein secretion by helping the post-translocational extracellular folding of several secreted proteins. This chain is Foldase protein PrsA 2, found in Streptococcus pyogenes serotype M6 (strain ATCC BAA-946 / MGAS10394).